A 942-amino-acid chain; its full sequence is MANLEWVCVPRCYEVRKNCLTGQATLEHPLKQRTVTVVDSNPLSRALEGTDPLSQFARQDDELNDPLSQMVSEFDLKSKRRERDRTEPEDNTLQWSSRRLGILNRFTTNEKLSLSTSFLVSSGSLDGGNESIKAQTVVADKTKFRLEQLDHFDDGSMRHMMDLTQQEYIQRFEQLKQELIQSWHNDQRVKALKIAIQCAKMLADTTVLQFYPSQYVLITDILDVFGKLVYERLRAKASGDPAASAATLEREREAARDTCQNWFYKIASIRELLPRFYLELSIFKCYEFLSSSREEYERILQRLTHQLRGIADPLVSSYARCYLVRMGVTLTSSKTYIRENFADLFLIYPQIFRFVARFNLHPEIVTASSYLQLYAPAFDYMLLCLVHKSELHTQDILNECKQLKNNGAILMSVLSSFNSEFIATNALEFIALINASETPGISKSQLLRSLGSCVSSCPPLQEQRVTFLKAAFETINKLTDPNEYINCVETWAVFVSQYFTIHEVNRLLGELNTRMCLGKAYEKHYSQLQNILTRIMQNYRSIELLLIQPNFLPYLDLFQKESVRVEVCKNILSFYKQNSDEYTCDAVVTNALMYLGKILNDSVNALSVDDERRQIAQLINVFIHKVHFGNDLEQQLSFYVEARGTFSNLDAVYVTLVHAACKLATRNRSKSTGFVKACIAYCFITIPSIEAVQQQMNLYLLCGQLALQHLCLGQADACFEAALQLVNELPAATVDFDGKPRSLEPFLVSYMCNILATLIVVPDSPEQGVLYFLRLLLEVVGRHKFKVDSSAPSIIYLHSLDMLYVQSLERFPYHIKGVVSNDDLYGHDPKFLQEVNNMCAQVVDAILLQLKSLGVAQQQRSQAELALELFLRIVKYADLERETIAQLAVNLWLLANKAQSQLDVKTLPQTLRSVEIIYKQIKDASPIRAQTIAKLLLRVRSS.

This sequence belongs to the VPS35L family. Component of the heterotrimeric retriever complex.

It localises to the endosome. Functionally, acts as a component of the retriever complex. The retriever complex is a heterotrimeric complex related to retromer cargo-selective complex (CSC) and essential for retromer-independent retrieval and recycling of numerous cargos. The chain is VPS35 endosomal protein sorting factor-like from Drosophila melanogaster (Fruit fly).